The sequence spans 289 residues: Cysteine-rich venom protein Mr30 (289 aa).

An N-terminal signal peptide occupies residues 1 to 24 (MLSTMQTVGAILMLSIVFVAGTKR). E33 bears the 4-carboxyglutamate mark. The 123-residue stretch at 62–184 (VRMHNVIRAT…GEDRYFVCNY (123 aa)) folds into the SCP domain.

The protein belongs to the CRISP family. In terms of processing, contains 11 disulfide bonds. As to expression, expressed by the venom duct.

The protein localises to the secreted. Its function is as follows. Has no proteolytic activity. The sequence is that of Cysteine-rich venom protein Mr30 from Conus marmoreus (Marble cone).